The following is a 143-amino-acid chain: Small ribosomal subunit protein uS12 (143 aa).

Basic residues predominate over residues 1–20; that stretch reads MGKCRGLRTARKLRSHRRDH. A disordered region spans residues 1-26; it reads MGKCRGLRTARKLRSHRRDHKWHDKQ. A Glycyl lysine isopeptide (Lys-Gly) (interchain with G-Cter in SUMO2) cross-link involves residue lysine 37. The residue at position 54 (lysine 54) is an N6-succinyllysine. Proline 62 carries the 3-hydroxyproline modification. An N6-acetyllysine modification is found at lysine 135.

Belongs to the universal ribosomal protein uS12 family. In terms of assembly, component of the 40S small ribosomal subunit. Part of the small subunit (SSU) processome, composed of more than 70 proteins and the RNA chaperone small nucleolar RNA (snoRNA) U3. As to quaternary structure, (Microbial infection) Interacts with the African swine fever virus (ASFV) ubiquitin-conjugating enzyme UBCv1; this interaction probably plays a role in the viral regulation of host protein synthesis. In terms of processing, hydroxylation at Pro-62 affects translation termination efficiency.

It is found in the cytoplasm. The protein resides in the cytosol. The protein localises to the rough endoplasmic reticulum. It localises to the nucleus. Its subcellular location is the nucleolus. In terms of biological role, component of the ribosome, a large ribonucleoprotein complex responsible for the synthesis of proteins in the cell. The small ribosomal subunit (SSU) binds messenger RNAs (mRNAs) and translates the encoded message by selecting cognate aminoacyl-transfer RNA (tRNA) molecules. The large subunit (LSU) contains the ribosomal catalytic site termed the peptidyl transferase center (PTC), which catalyzes the formation of peptide bonds, thereby polymerizing the amino acids delivered by tRNAs into a polypeptide chain. The nascent polypeptides leave the ribosome through a tunnel in the LSU and interact with protein factors that function in enzymatic processing, targeting, and the membrane insertion of nascent chains at the exit of the ribosomal tunnel. Plays an important role in translational accuracy. Part of the small subunit (SSU) processome, first precursor of the small eukaryotic ribosomal subunit. During the assembly of the SSU processome in the nucleolus, many ribosome biogenesis factors, an RNA chaperone and ribosomal proteins associate with the nascent pre-rRNA and work in concert to generate RNA folding, modifications, rearrangements and cleavage as well as targeted degradation of pre-ribosomal RNA by the RNA exosome. The sequence is that of Small ribosomal subunit protein uS12 (RPS23) from Sus scrofa (Pig).